Consider the following 535-residue polypeptide: CTP synthase (535 aa).

The amidoligase domain stretch occupies residues 1–267 (MTKYIFVTGG…DQIVLDHFGV (267 aa)). Ser-13 provides a ligand contact to CTP. Residue Ser-13 coordinates UTP. 14–19 (SLGKGI) contributes to the ATP binding site. Residue Tyr-54 participates in L-glutamine binding. Asp-71 provides a ligand contact to ATP. Positions 71 and 141 each coordinate Mg(2+). Residues 148-150 (DIE), 188-193 (KTKPTQ), and Lys-224 contribute to the CTP site. UTP-binding positions include 188–193 (KTKPTQ) and Lys-224. In terms of domain architecture, Glutamine amidotransferase type-1 spans 292 to 535 (KIALVGKYVA…VAAASREVKD (244 aa)). Gly-354 contributes to the L-glutamine binding site. The active-site Nucleophile; for glutamine hydrolysis is Cys-381. L-glutamine-binding positions include 382–385 (LGMQ), Glu-405, and Arg-463. Catalysis depends on residues His-508 and Glu-510.

The protein belongs to the CTP synthase family. As to quaternary structure, homotetramer.

It catalyses the reaction UTP + L-glutamine + ATP + H2O = CTP + L-glutamate + ADP + phosphate + 2 H(+). The catalysed reaction is L-glutamine + H2O = L-glutamate + NH4(+). The enzyme catalyses UTP + NH4(+) + ATP = CTP + ADP + phosphate + 2 H(+). The protein operates within pyrimidine metabolism; CTP biosynthesis via de novo pathway; CTP from UDP: step 2/2. Its activity is regulated as follows. Allosterically activated by GTP, when glutamine is the substrate; GTP has no effect on the reaction when ammonia is the substrate. The allosteric effector GTP functions by stabilizing the protein conformation that binds the tetrahedral intermediate(s) formed during glutamine hydrolysis. Inhibited by the product CTP, via allosteric rather than competitive inhibition. In terms of biological role, catalyzes the ATP-dependent amination of UTP to CTP with either L-glutamine or ammonia as the source of nitrogen. Regulates intracellular CTP levels through interactions with the four ribonucleotide triphosphates. The polypeptide is CTP synthase (Levilactobacillus brevis (strain ATCC 367 / BCRC 12310 / CIP 105137 / JCM 1170 / LMG 11437 / NCIMB 947 / NCTC 947) (Lactobacillus brevis)).